Consider the following 526-residue polypeptide: MSEELKYELPGLERKAHECESTRPEGPGDATKPDELATTASVYGKLMASAAKLKATFAAGDREGKRIAAAIRAAAGAYQKIEEQKAAELNRQMNGSDAPPPAAEAVVPDMSGIPGPLTIPSMEYPSAAAAADEMDWEAAARIIHSGDTQALSMKYFRDQWRDYQSTLEGHGRHFANPAEGWSGAAAETCAEAQRRLSTWWADMGAECGRLAQEATTFVDAHDKLVANHPTMDDVKAFEEAEWESEWDRQYAWAIKQEKSEDALEAYANGSQIQEIRPGKPPSIGGLPAVNDGDVQATPTSTTGGPGGPGSGSGGGSGGGASGGSGGGTPEMPELPSTDPSMSPMSTNSAGEEQSSGSPSSGGSSSGGSPSGGSPSGGGAPSSGGMPEGGLPTDMPGGPDIPGLDDPSLKPASAGGGGGGGVGGGGGGGMPAAPLGPAVGADSVSPSPSSTRGGGVGVPTGTGGGAGGMMGGGMGGMGAGHGQGQGKEKKRDPKLAPDEDLYTEDRAHSEGVIGHRPRREKDSGKQQ.

The segment covering 1-23 (MSEELKYELPGLERKAHECESTR) has biased composition (basic and acidic residues). Disordered stretches follow at residues 1 to 35 (MSEE…KPDE), 91 to 110 (RQMN…VPDM), and 271 to 526 (QIQE…GKQQ). Residues 303–328 (GGPGGPGSGSGGGSGGGASGGSGGGT) are compositionally biased toward gly residues. A compositionally biased stretch (low complexity) spans 335–362 (PSTDPSMSPMSTNSAGEEQSSGSPSSGG). Residues 363-387 (SSSGGSPSGGSPSGGGAPSSGGMPE) are compositionally biased toward gly residues. A compositionally biased stretch (low complexity) spans 393-405 (DMPGGPDIPGLDD). Over residues 413–429 (AGGGGGGGVGGGGGGGM) the composition is skewed to gly residues. Positions 430-440 (PAAPLGPAVGA) are enriched in low complexity. Residues 451 to 484 (RGGGVGVPTGTGGGAGGMMGGGMGGMGAGHGQGQ) show a composition bias toward gly residues. Over residues 485-508 (GKEKKRDPKLAPDEDLYTEDRAHS) the composition is skewed to basic and acidic residues.

The protein belongs to the EspB family.

It is found in the secreted. Involved in DNA conjugation, at least in the recipient strain. This is ESX-1 secretion-associated protein EspB from Mycolicibacterium smegmatis (strain MKD8) (Mycobacterium smegmatis).